Reading from the N-terminus, the 1104-residue chain is DNA polymerase delta catalytic subunit (1104 aa).

The tract at residues Met1–Asp60 is disordered. The span at Asp31–Asp60 shows a compositional bias: acidic residues. The Zn(2+) site is built by Cys1012, Cys1015, Cys1027, and Cys1030. Residues Cys1012 to Cys1030 form a CysA-type zinc finger. 4 residues coordinate [4Fe-4S] cluster: Cys1059, Cys1062, Cys1072, and Cys1077. The CysB motif motif lies at Cys1059–Cys1077.

The protein belongs to the DNA polymerase type-B family. In terms of assembly, heterotetramer composed of subunits of 125 kDa, 50 kDa, 66 kDa and 12 kDa. The 125 kDa subunit contains the polymerase active site and most likely the active site for the 3'-5' exonuclease activity. The cofactor is [4Fe-4S] cluster.

It localises to the nucleus. It carries out the reaction DNA(n) + a 2'-deoxyribonucleoside 5'-triphosphate = DNA(n+1) + diphosphate. Its function is as follows. Possesses two enzymatic activities: DNA synthesis (polymerase) and an exonucleolytic activity that degrades single stranded DNA in the 3'- to 5'-direction. This Dictyostelium discoideum (Social amoeba) protein is DNA polymerase delta catalytic subunit (pold1).